The sequence spans 216 residues: MKDYSNYHKVNINNKLLHDGKLIFQQGLKGFESEKVTIDGIEKTVMITSKYSSGDGSARYILGEIADIYRGGVVKFNDETWLITSHPLSNKIYKKAEIKICGTSFFLTSEDKLIDTGKINEITGKPIYEKVPGEKTEVPCIFERTTSINGTELAVNLPDGQANITIPYLVHEKLKIGLTLTFFGEDYQVDDIDYSKVYGDHGTIKLVAKKKVGEKT.

The protein is SPbeta prophage-derived uncharacterized protein YomX (yomX) of Bacillus subtilis (strain 168).